The following is a 155-amino-acid chain: SsrA-binding protein (155 aa).

This sequence belongs to the SmpB family.

It localises to the cytoplasm. Functionally, required for rescue of stalled ribosomes mediated by trans-translation. Binds to transfer-messenger RNA (tmRNA), required for stable association of tmRNA with ribosomes. tmRNA and SmpB together mimic tRNA shape, replacing the anticodon stem-loop with SmpB. tmRNA is encoded by the ssrA gene; the 2 termini fold to resemble tRNA(Ala) and it encodes a 'tag peptide', a short internal open reading frame. During trans-translation Ala-aminoacylated tmRNA acts like a tRNA, entering the A-site of stalled ribosomes, displacing the stalled mRNA. The ribosome then switches to translate the ORF on the tmRNA; the nascent peptide is terminated with the 'tag peptide' encoded by the tmRNA and targeted for degradation. The ribosome is freed to recommence translation, which seems to be the essential function of trans-translation. The protein is SsrA-binding protein of Bacillus mycoides (strain KBAB4) (Bacillus weihenstephanensis).